The sequence spans 190 residues: Shikimate kinase (190 aa).

Glycine 14–threonine 19 lines the ATP pocket. Serine 18 contributes to the Mg(2+) binding site. Substrate-binding residues include aspartate 36, arginine 60, and glycine 82. Residue arginine 120 coordinates ATP. Residue arginine 139 coordinates substrate.

It belongs to the shikimate kinase family. In terms of assembly, monomer. Mg(2+) is required as a cofactor.

The protein localises to the cytoplasm. The enzyme catalyses shikimate + ATP = 3-phosphoshikimate + ADP + H(+). Its pathway is metabolic intermediate biosynthesis; chorismate biosynthesis; chorismate from D-erythrose 4-phosphate and phosphoenolpyruvate: step 5/7. In terms of biological role, catalyzes the specific phosphorylation of the 3-hydroxyl group of shikimic acid using ATP as a cosubstrate. The sequence is that of Shikimate kinase from Thioalkalivibrio sulfidiphilus (strain HL-EbGR7).